A 126-amino-acid polypeptide reads, in one-letter code: Nascent polypeptide-associated complex protein (126 aa).

In terms of domain architecture, NAC-A/B spans 10 to 77 (PRMMKQMQKM…AKKVAKEEEK (68 aa)).

The protein belongs to the NAC-alpha family. As to quaternary structure, homodimer. Interacts with the ribosome. Binds ribosomal RNA.

Contacts the emerging nascent chain on the ribosome. This chain is Nascent polypeptide-associated complex protein, found in Methanococcus maripaludis (strain DSM 14266 / JCM 13030 / NBRC 101832 / S2 / LL).